The sequence spans 393 residues: Putative N(4)-(beta-N-acetylglucosaminyl)-L-asparaginase GM21137 (393 aa).

A signal peptide spans 1-23 (MRTHLRASLWVLCLASTAFSILA). Cystine bridges form between Cys97–Cys102 and Cys196–Cys212. Thr243 functions as the Nucleophile in the catalytic mechanism. Residues 271–274 (RVGD) and 294–297 (TGDG) contribute to the substrate site. A disulfide bridge connects residues Cys354 and Cys381.

Belongs to the Ntn-hydrolase family. Heterotetramer of two alpha and two beta chains arranged as a dimer of alpha/beta heterodimers. Cleaved into an alpha and beta chain by autocatalysis; this activates the enzyme. The N-terminal residue of the beta subunit is responsible for the nucleophile hydrolase activity.

The enzyme catalyses N(4)-(beta-N-acetyl-D-glucosaminyl)-L-asparagine + H2O = N-acetyl-beta-D-glucosaminylamine + L-aspartate + H(+). Cleaves the GlcNAc-Asn bond which joins oligosaccharides to the peptide of asparagine-linked glycoproteins. The sequence is that of Putative N(4)-(beta-N-acetylglucosaminyl)-L-asparaginase GM21137 from Drosophila sechellia (Fruit fly).